The chain runs to 692 residues: Methionine--tRNA ligase (692 aa).

Positions 12–22 (PYANGSFHIGH) match the 'HIGH' region motif. Cys143, Cys146, Cys156, and Cys159 together coordinate Zn(2+). The 'KMSKS' region signature appears at 341–345 (KMSKS). Position 344 (Lys344) interacts with ATP. Positions 586-692 (DFAKIDLRIA…PGAQPGMRVR (107 aa)) constitute a tRNA-binding domain.

It belongs to the class-I aminoacyl-tRNA synthetase family. MetG type 1 subfamily. As to quaternary structure, homodimer. Zn(2+) is required as a cofactor.

Its subcellular location is the cytoplasm. The catalysed reaction is tRNA(Met) + L-methionine + ATP = L-methionyl-tRNA(Met) + AMP + diphosphate. In terms of biological role, is required not only for elongation of protein synthesis but also for the initiation of all mRNA translation through initiator tRNA(fMet) aminoacylation. The protein is Methionine--tRNA ligase of Bordetella bronchiseptica (strain ATCC BAA-588 / NCTC 13252 / RB50) (Alcaligenes bronchisepticus).